The following is a 101-amino-acid chain: Small ribosomal subunit protein eS24 (101 aa).

It belongs to the eukaryotic ribosomal protein eS24 family.

In Methanosarcina mazei (strain ATCC BAA-159 / DSM 3647 / Goe1 / Go1 / JCM 11833 / OCM 88) (Methanosarcina frisia), this protein is Small ribosomal subunit protein eS24.